The following is a 345-amino-acid chain: S-adenosylmethionine:tRNA ribosyltransferase-isomerase (345 aa).

Belongs to the QueA family. As to quaternary structure, monomer.

The protein resides in the cytoplasm. The enzyme catalyses 7-aminomethyl-7-carbaguanosine(34) in tRNA + S-adenosyl-L-methionine = epoxyqueuosine(34) in tRNA + adenine + L-methionine + 2 H(+). The protein operates within tRNA modification; tRNA-queuosine biosynthesis. Transfers and isomerizes the ribose moiety from AdoMet to the 7-aminomethyl group of 7-deazaguanine (preQ1-tRNA) to give epoxyqueuosine (oQ-tRNA). The sequence is that of S-adenosylmethionine:tRNA ribosyltransferase-isomerase from Helicobacter pylori (strain G27).